Reading from the N-terminus, the 189-residue chain is Elongation factor P (189 aa).

Lys-34 is subject to N6-(3,6-diaminohexanoyl)-5-hydroxylysine.

This sequence belongs to the elongation factor P family. In terms of processing, may be beta-lysylated on the epsilon-amino group of Lys-34 by the combined action of EpmA and EpmB, and then hydroxylated on the C5 position of the same residue by EpmC (if this protein is present). Lysylation is critical for the stimulatory effect of EF-P on peptide-bond formation. The lysylation moiety may extend toward the peptidyltransferase center and stabilize the terminal 3-CCA end of the tRNA. Hydroxylation of the C5 position on Lys-34 may allow additional potential stabilizing hydrogen-bond interactions with the P-tRNA.

Its subcellular location is the cytoplasm. It functions in the pathway protein biosynthesis; polypeptide chain elongation. Functionally, involved in peptide bond synthesis. Alleviates ribosome stalling that occurs when 3 or more consecutive Pro residues or the sequence PPG is present in a protein, possibly by augmenting the peptidyl transferase activity of the ribosome. Modification of Lys-34 is required for alleviation. This chain is Elongation factor P, found in Idiomarina loihiensis (strain ATCC BAA-735 / DSM 15497 / L2-TR).